We begin with the raw amino-acid sequence, 125 residues long: UPF0231 protein APP7_1023 (125 aa).

This sequence belongs to the UPF0231 family.

The protein is UPF0231 protein APP7_1023 of Actinobacillus pleuropneumoniae serotype 7 (strain AP76).